Reading from the N-terminus, the 344-residue chain is MITDTAALQRTIEHREIFHDEMLHLMRRIMSGEMSPVMIAALAVGLRVKKESIGEIAAAATVMREFATPVPVADTEHLVDLCGTGGDAAHTFNISTTAMFVAAAAGARVAKHGGRSVSSTSGSADVLEALGASIDLAPAQVAECLAESGIGFMFAPNHHPAMKHAGPVRKELGVRTIFNILGPLTNPAGAPNQLMGVFHPDLVGIQVRVLQRLGSRHVLVVYGMNGMDEISLSGETLIGELKDGEVREYTVHPSDFGLPVYDTRGLKVASKDESVGCIRRALADEAGPVRDIVLLNAGAALYAADVAPSIGEGVRQAREAVASGAAAKTLERFVATTRRLKGAA.

5-phospho-alpha-D-ribose 1-diphosphate is bound by residues glycine 83, 86–87, threonine 91, 93–96, 111–119, and serine 123; these read GD, NIST, and KHGGRSVSS. Residue glycine 83 participates in anthranilate binding. Serine 95 is a Mg(2+) binding site. Arginine 169 contributes to the anthranilate binding site. Mg(2+) is bound by residues aspartate 228 and glutamate 229.

It belongs to the anthranilate phosphoribosyltransferase family. Homodimer. Mg(2+) is required as a cofactor.

It carries out the reaction N-(5-phospho-beta-D-ribosyl)anthranilate + diphosphate = 5-phospho-alpha-D-ribose 1-diphosphate + anthranilate. The protein operates within amino-acid biosynthesis; L-tryptophan biosynthesis; L-tryptophan from chorismate: step 2/5. In terms of biological role, catalyzes the transfer of the phosphoribosyl group of 5-phosphorylribose-1-pyrophosphate (PRPP) to anthranilate to yield N-(5'-phosphoribosyl)-anthranilate (PRA). In Methylibium petroleiphilum (strain ATCC BAA-1232 / LMG 22953 / PM1), this protein is Anthranilate phosphoribosyltransferase.